A 335-amino-acid polypeptide reads, in one-letter code: DNA-directed RNA polymerase subunit alpha (335 aa).

The alpha N-terminal domain (alpha-NTD) stretch occupies residues 1–248 (MTIQTSRTLS…GLFAPLQEVS (248 aa)). The tract at residues 256-335 (KPDEDNQKNQ…LPRTREKGKA (80 aa)) is alpha C-terminal domain (alpha-CTD).

Belongs to the RNA polymerase alpha chain family. As to quaternary structure, in cyanobacteria the RNAP catalytic core is composed of 2 alpha, 1 beta, 1 beta', 1 gamma and 1 omega subunit. When a sigma factor is associated with the core the holoenzyme is formed, which can initiate transcription.

The catalysed reaction is RNA(n) + a ribonucleoside 5'-triphosphate = RNA(n+1) + diphosphate. Functionally, DNA-dependent RNA polymerase catalyzes the transcription of DNA into RNA using the four ribonucleoside triphosphates as substrates. This is DNA-directed RNA polymerase subunit alpha from Synechococcus sp. (strain JA-2-3B'a(2-13)) (Cyanobacteria bacterium Yellowstone B-Prime).